The primary structure comprises 385 residues: Elongation factor Ts, mitochondrial (385 aa).

The transit peptide at M1–F50 directs the protein to the mitochondrion.

The protein belongs to the EF-Ts family.

The protein resides in the mitochondrion. Associates with the EF-Tu.GDP complex and induces the exchange of GDP to GTP. It remains bound to the aminoacyl-tRNA.EF-Tu.GTP complex up to the GTP hydrolysis stage on the ribosome. The polypeptide is Elongation factor Ts, mitochondrial (Oryza sativa subsp. indica (Rice)).